The following is a 99-amino-acid chain: Large ribosomal subunit protein bL21 (99 aa).

Belongs to the bacterial ribosomal protein bL21 family. Part of the 50S ribosomal subunit. Contacts protein L20.

Functionally, this protein binds to 23S rRNA in the presence of protein L20. The chain is Large ribosomal subunit protein bL21 from Acholeplasma laidlawii (strain PG-8A).